Consider the following 215-residue polypeptide: Adenylate kinase (215 aa).

10-15 (GAGKGT) contacts ATP. Residues 30–59 (STGDIFRKNIKEKTELGQKVEGLLAQGKLV) are NMP. AMP is bound by residues Thr-31, Arg-36, 57 to 59 (KLV), 85 to 88 (GFPR), and Gln-92. An LID region spans residues 126–163 (GRRVCPSCGASYHIDNNPTKVDGICDACQTPVIQREDD). Arg-127 contacts ATP. Zn(2+) contacts are provided by Cys-130 and Cys-133. Residue 136–137 (SY) coordinates ATP. The Zn(2+) site is built by Cys-150 and Cys-153. AMP contacts are provided by Arg-160 and Arg-171. Position 199 (Leu-199) interacts with ATP.

The protein belongs to the adenylate kinase family. Monomer.

The protein resides in the cytoplasm. It carries out the reaction AMP + ATP = 2 ADP. It participates in purine metabolism; AMP biosynthesis via salvage pathway; AMP from ADP: step 1/1. In terms of biological role, catalyzes the reversible transfer of the terminal phosphate group between ATP and AMP. Plays an important role in cellular energy homeostasis and in adenine nucleotide metabolism. This Finegoldia magna (strain ATCC 29328 / DSM 20472 / WAL 2508) (Peptostreptococcus magnus) protein is Adenylate kinase.